The sequence spans 419 residues: Haloacid dehalogenase-like hydrolase domain-containing 5 (419 aa).

Residues 1–15 form the signal peptide; the sequence is MAALAGLGVLGAGRH.

This sequence belongs to the HAD-like hydrolase superfamily.

In Mus musculus (Mouse), this protein is Haloacid dehalogenase-like hydrolase domain-containing 5.